We begin with the raw amino-acid sequence, 359 residues long: Threonine dehydratase biosynthetic, chloroplastic (359 aa).

ACT-like domains are found at residues 184-256 and 278-349; these read ALLA…NFSH and IFGE…LDNS.

This sequence belongs to the serine/threonine dehydratase family. As to quaternary structure, homotetramer. Requires pyridoxal 5'-phosphate as cofactor. In terms of tissue distribution, floral buds of untreated plants. After ABA treatment or mechanical wounding is mostly accumulated in leaves, to a lesser extent in stems, but not in roots. Expressed in anthers, carpel leaves, pith cells, sepals and petals. Not expressed in stomium, vascular bundles, epidermal cells or pollen mother cells.

The protein resides in the plastid. It localises to the chloroplast. The catalysed reaction is L-threonine = 2-oxobutanoate + NH4(+). The protein operates within amino-acid biosynthesis; L-isoleucine biosynthesis; 2-oxobutanoate from L-threonine: step 1/1. In Solanum tuberosum (Potato), this protein is Threonine dehydratase biosynthetic, chloroplastic.